The chain runs to 256 residues: MSLLSKTRELNTLLQKHKGIAVDFKDVAQTISNVTVTNVFIVSRRGKILGSCLNELLKSERIKDMLEDRHIPREYTEELMNVKQTESNIDIDNELTVFPPENREVFLNSRTTIFPILGGGERLGTLVLGRVQDDFNENDLVLGEYAATVIGMEILREKHNEVEKEARDKAAITMAINSLSYSEKEAIEHIFEELGGTEGLLIASKVADRVGITRSVIVNALRKLESAGVIESRSLGMKGTFIKVKKDKFLDELEKK.

Residues 1–155 (MSLLSKTREL…AATVIGMEIL (155 aa)) form a GAF domain region. The segment at residues 203–222 (ASKVADRVGITRSVIVNALR) is a DNA-binding region (H-T-H motif).

Belongs to the CodY family.

Its subcellular location is the cytoplasm. DNA-binding global transcriptional regulator which is involved in the adaptive response to starvation and acts by directly or indirectly controlling the expression of numerous genes in response to nutrient availability. During rapid exponential growth, CodY is highly active and represses genes whose products allow adaptation to nutrient depletion. This is Global transcriptional regulator CodY from Staphylococcus epidermidis (strain ATCC 35984 / DSM 28319 / BCRC 17069 / CCUG 31568 / BM 3577 / RP62A).